A 164-amino-acid chain; its full sequence is Galectin-3 (164 aa).

A Galectin domain is found at 9-154 (STVDLSEPLK…FSDVLGVTVL (146 aa)). The a carbohydrate site is built by His-60, Arg-64, Asn-73, and Glu-84.

In terms of assembly, homotetramer. Oligomerization is required for carbohydrate binding.

The protein resides in the secreted. Its subcellular location is the extracellular space. It localises to the extracellular matrix. The protein localises to the cell wall. Its function is as follows. Binds lactose. May play a role in fruiting body formation. The sequence is that of Galectin-3 (Cgl3) from Coprinopsis cinerea (strain Okayama-7 / 130 / ATCC MYA-4618 / FGSC 9003) (Inky cap fungus).